A 149-amino-acid polypeptide reads, in one-letter code: Large ribosomal subunit protein uL22c (149 aa).

The protein belongs to the universal ribosomal protein uL22 family. Part of the 50S ribosomal subunit.

Its subcellular location is the plastid. The protein localises to the chloroplast. In terms of biological role, this protein binds specifically to 23S rRNA. Functionally, the globular domain of the protein is located near the polypeptide exit tunnel on the outside of the subunit, while an extended beta-hairpin is found that lines the wall of the exit tunnel in the center of the 70S ribosome. The protein is Large ribosomal subunit protein uL22c (rpl22) of Oryza nivara (Indian wild rice).